We begin with the raw amino-acid sequence, 173 residues long: MTVILGIDPGSRITGYGIVRQEGCKLTYLGSGCIRTKVDDLPARLKLIYAGVSEIITQFQPDCLAIEQVFMAKNADSALKLGQARGVAIVVAMNLDLPVFEYAARQVKQTVVGSGAAEKSQVQHMVRTLLKLPANPQADAADALAIAITHCHVSQNALRMGSGGLNLARGRLR.

Active-site residues include aspartate 8, glutamate 67, and aspartate 139. Positions 8, 67, and 139 each coordinate Mg(2+).

This sequence belongs to the RuvC family. In terms of assembly, homodimer which binds Holliday junction (HJ) DNA. The HJ becomes 2-fold symmetrical on binding to RuvC with unstacked arms; it has a different conformation from HJ DNA in complex with RuvA. In the full resolvosome a probable DNA-RuvA(4)-RuvB(12)-RuvC(2) complex forms which resolves the HJ. Requires Mg(2+) as cofactor.

Its subcellular location is the cytoplasm. The enzyme catalyses Endonucleolytic cleavage at a junction such as a reciprocal single-stranded crossover between two homologous DNA duplexes (Holliday junction).. Functionally, the RuvA-RuvB-RuvC complex processes Holliday junction (HJ) DNA during genetic recombination and DNA repair. Endonuclease that resolves HJ intermediates. Cleaves cruciform DNA by making single-stranded nicks across the HJ at symmetrical positions within the homologous arms, yielding a 5'-phosphate and a 3'-hydroxyl group; requires a central core of homology in the junction. The consensus cleavage sequence is 5'-(A/T)TT(C/G)-3'. Cleavage occurs on the 3'-side of the TT dinucleotide at the point of strand exchange. HJ branch migration catalyzed by RuvA-RuvB allows RuvC to scan DNA until it finds its consensus sequence, where it cleaves and resolves the cruciform DNA. This chain is Crossover junction endodeoxyribonuclease RuvC, found in Sodalis glossinidius (strain morsitans).